We begin with the raw amino-acid sequence, 80 residues long: Keratin-associated protein 6-1 (80 aa).

This sequence belongs to the KRTAP type 6 family. As to quaternary structure, interacts with hair keratins.

Functionally, in the hair cortex, hair keratin intermediate filaments are embedded in an interfilamentous matrix, consisting of hair keratin-associated proteins (KRTAP), which are essential for the formation of a rigid and resistant hair shaft through their extensive disulfide bond cross-linking with abundant cysteine residues of hair keratins. The matrix proteins include the high-sulfur and high-glycine-tyrosine keratins. This is Keratin-associated protein 6-1 (KRTAP6-1) from Oryctolagus cuniculus (Rabbit).